Consider the following 427-residue polypeptide: Gamma-glutamyl phosphate reductase (427 aa).

This sequence belongs to the gamma-glutamyl phosphate reductase family.

The protein localises to the cytoplasm. It carries out the reaction L-glutamate 5-semialdehyde + phosphate + NADP(+) = L-glutamyl 5-phosphate + NADPH + H(+). It functions in the pathway amino-acid biosynthesis; L-proline biosynthesis; L-glutamate 5-semialdehyde from L-glutamate: step 2/2. Catalyzes the NADPH-dependent reduction of L-glutamate 5-phosphate into L-glutamate 5-semialdehyde and phosphate. The product spontaneously undergoes cyclization to form 1-pyrroline-5-carboxylate. This chain is Gamma-glutamyl phosphate reductase, found in Rhizobium rhizogenes (strain K84 / ATCC BAA-868) (Agrobacterium radiobacter).